We begin with the raw amino-acid sequence, 207 residues long: Small ribosomal subunit protein uS4 (207 aa).

Residues 20-45 form a disordered region; the sequence is TPKAARYMEKRPYAPGEHGRTKRKAD. Residues 93 to 158 form the S4 RNA-binding domain; sequence MRLDALVLRA…TEPFQVAAAG (66 aa).

It belongs to the universal ribosomal protein uS4 family. Part of the 30S ribosomal subunit. Contacts protein S5. The interaction surface between S4 and S5 is involved in control of translational fidelity.

One of the primary rRNA binding proteins, it binds directly to 16S rRNA where it nucleates assembly of the body of the 30S subunit. In terms of biological role, with S5 and S12 plays an important role in translational accuracy. This Leifsonia xyli subsp. xyli (strain CTCB07) protein is Small ribosomal subunit protein uS4.